A 529-amino-acid chain; its full sequence is Peptide chain release factor 3 (529 aa).

The region spanning 11–280 (SKRRTFAIIS…GLVAWAPAPM (270 aa)) is the tr-type G domain. GTP is bound by residues 20 to 27 (SHPDAGKT), 88 to 92 (DTPGH), and 142 to 145 (NKLD).

The protein belongs to the TRAFAC class translation factor GTPase superfamily. Classic translation factor GTPase family. PrfC subfamily.

Its subcellular location is the cytoplasm. In terms of biological role, increases the formation of ribosomal termination complexes and stimulates activities of RF-1 and RF-2. It binds guanine nucleotides and has strong preference for UGA stop codons. It may interact directly with the ribosome. The stimulation of RF-1 and RF-2 is significantly reduced by GTP and GDP, but not by GMP. The protein is Peptide chain release factor 3 of Pectobacterium carotovorum subsp. carotovorum (strain PC1).